The chain runs to 322 residues: Ribosomal RNA small subunit methyltransferase H (322 aa).

S-adenosyl-L-methionine-binding positions include Gly-43–Tyr-45, Asp-60, Phe-86, Asp-104, and Gln-111.

The protein belongs to the methyltransferase superfamily. RsmH family.

The protein resides in the cytoplasm. It catalyses the reaction cytidine(1402) in 16S rRNA + S-adenosyl-L-methionine = N(4)-methylcytidine(1402) in 16S rRNA + S-adenosyl-L-homocysteine + H(+). Specifically methylates the N4 position of cytidine in position 1402 (C1402) of 16S rRNA. The polypeptide is Ribosomal RNA small subunit methyltransferase H (Caulobacter sp. (strain K31)).